Reading from the N-terminus, the 422-residue chain is ORC1-type DNA replication protein 13 (422 aa).

ATP-binding positions include 80–84, tyrosine 231, and arginine 243; that span reads TGKTL.

The protein belongs to the CDC6/cdc18 family.

Its function is as follows. Involved in regulation of DNA replication. The sequence is that of ORC1-type DNA replication protein 13 (cdc6m) from Haloarcula marismortui (strain ATCC 43049 / DSM 3752 / JCM 8966 / VKM B-1809) (Halobacterium marismortui).